The primary structure comprises 132 residues: Long-chain acyl-CoA thioesterase FadM (132 aa).

Aspartate 13 is an active-site residue.

Belongs to the 4-hydroxybenzoyl-CoA thioesterase family. As to quaternary structure, homotetramer.

The enzyme catalyses (3E,5Z)-tetradecadienoyl-CoA + H2O = (3E,5Z)-tetradecadienoate + CoA + H(+). The catalysed reaction is (3E,5Z)-dodecadienoyl-CoA + H2O = (3E,5Z)-dodecadienoate + CoA + H(+). It carries out the reaction (9Z)-octadecenoyl-CoA + H2O = (9Z)-octadecenoate + CoA + H(+). It catalyses the reaction octadecanoyl-CoA + H2O = octadecanoate + CoA + H(+). The enzyme catalyses hexadecanoyl-CoA + H2O = hexadecanoate + CoA + H(+). The catalysed reaction is (3S)-hydroxytetradecanoyl-CoA + H2O = (3S)-hydroxytetradecanoate + CoA + H(+). It carries out the reaction tetradecanoyl-CoA + H2O = tetradecanoate + CoA + H(+). Its function is as follows. Long-chain acyl-CoA thioesterase that could be involved in beta-oxidation of fatty acids. Is most active with 3,5-tetradecadienoyl-CoA, a metabolite of oleic acid that is hydrolyzed during oleate beta-oxidation, but can also use other substrates such as 3,5-dodecadienoyl-CoA, 9-cis-octadecenoyl-CoA, octadecanoyl-CoA, hexadecanoyl-CoA, 3-hydroxytetradecanoyl-CoA and tetradecanoyl-CoA. This Escherichia coli (strain K12) protein is Long-chain acyl-CoA thioesterase FadM.